Reading from the N-terminus, the 588-residue chain is Aspartate--tRNA ligase (588 aa).

Residue Glu-172 participates in L-aspartate binding. The aspartate stretch occupies residues 196–199 (QLFK). Residue Arg-218 participates in L-aspartate binding. ATP is bound by residues 218–220 (RDE) and Gln-227. His-449 serves as a coordination point for L-aspartate. Glu-483 provides a ligand contact to ATP. Arg-490 is a binding site for L-aspartate. ATP is bound at residue 535-538 (GLDR).

Belongs to the class-II aminoacyl-tRNA synthetase family. Type 1 subfamily. Homodimer.

It is found in the cytoplasm. The catalysed reaction is tRNA(Asp) + L-aspartate + ATP = L-aspartyl-tRNA(Asp) + AMP + diphosphate. In terms of biological role, catalyzes the attachment of L-aspartate to tRNA(Asp) in a two-step reaction: L-aspartate is first activated by ATP to form Asp-AMP and then transferred to the acceptor end of tRNA(Asp). This is Aspartate--tRNA ligase from Haemophilus influenzae (strain 86-028NP).